A 417-amino-acid polypeptide reads, in one-letter code: GTP-binding protein YPT11 (417 aa).

Positions 1-34 (MSQRKRYSLNVVTSPSIPSPTPSAPIRTNESNWE) are disordered. GTP-binding positions include 97–104 (GDANVGKT), 228–232 (DTAGQ), and 292–295 (NKID). 2 S-geranylgeranyl cysteine lipidation sites follow: Cys415 and Cys416.

Belongs to the small GTPase superfamily. Rab family. In terms of assembly, interacts with MYO2 (via C-terminal tail domain). Interacts with YIF1, YIP3, YIP4 and YIP5.

Its subcellular location is the endoplasmic reticulum membrane. The protein resides in the bud tip. It localises to the bud neck. Its function is as follows. Involved in the positive control of both endoplasmic reticulum (ER) and mitochondrion inheritance during cell divison. Required for the MYO2-dependent retention of newly inherited mitochondria at the bud tip in developing daughter cells. In Saccharomyces cerevisiae (strain YJM789) (Baker's yeast), this protein is GTP-binding protein YPT11 (YPT11).